The chain runs to 803 residues: Elongation factor G, mitochondrial (803 aa).

The transit peptide at 1–24 (MVRPAQVRAFSGLARSATSTRLIP) directs the protein to the mitochondrion. One can recognise a tr-type G domain in the interval 102–388 (SKVRNIGIAA…GVCDYLPNPS (287 aa)). GTP contacts are provided by residues 111–118 (AHIDSGKT), 186–190 (DTPGH), and 240–243 (NKMD).

It belongs to the TRAFAC class translation factor GTPase superfamily. Classic translation factor GTPase family. EF-G/EF-2 subfamily.

The protein localises to the mitochondrion. Its pathway is protein biosynthesis; polypeptide chain elongation. Mitochondrial GTPase that catalyzes the GTP-dependent ribosomal translocation step during translation elongation. During this step, the ribosome changes from the pre-translocational (PRE) to the post-translocational (POST) state as the newly formed A-site-bound peptidyl-tRNA and P-site-bound deacylated tRNA move to the P and E sites, respectively. Catalyzes the coordinated movement of the two tRNA molecules, the mRNA and conformational changes in the ribosome. This chain is Elongation factor G, mitochondrial (mef1), found in Talaromyces marneffei (strain ATCC 18224 / CBS 334.59 / QM 7333) (Penicillium marneffei).